Reading from the N-terminus, the 158-residue chain is 2-C-methyl-D-erythritol 2,4-cyclodiphosphate synthase (158 aa).

2 residues coordinate a divalent metal cation: Asp-8 and His-10. Residues 8–10 (DVH) and 34–35 (HS) contribute to the 4-CDP-2-C-methyl-D-erythritol 2-phosphate site. His-42 serves as a coordination point for a divalent metal cation. 4-CDP-2-C-methyl-D-erythritol 2-phosphate contacts are provided by residues 56–58 (DIG), 61–65 (FPDTD), 100–106 (AQAPKMA), 132–135 (TTSE), Phe-139, and Arg-142.

The protein belongs to the IspF family. Homotrimer. The cofactor is a divalent metal cation.

It catalyses the reaction 4-CDP-2-C-methyl-D-erythritol 2-phosphate = 2-C-methyl-D-erythritol 2,4-cyclic diphosphate + CMP. It participates in isoprenoid biosynthesis; isopentenyl diphosphate biosynthesis via DXP pathway; isopentenyl diphosphate from 1-deoxy-D-xylulose 5-phosphate: step 4/6. Functionally, involved in the biosynthesis of isopentenyl diphosphate (IPP) and dimethylallyl diphosphate (DMAPP), two major building blocks of isoprenoid compounds. Catalyzes the conversion of 4-diphosphocytidyl-2-C-methyl-D-erythritol 2-phosphate (CDP-ME2P) to 2-C-methyl-D-erythritol 2,4-cyclodiphosphate (ME-CPP) with a corresponding release of cytidine 5-monophosphate (CMP). This Aliivibrio fischeri (strain ATCC 700601 / ES114) (Vibrio fischeri) protein is 2-C-methyl-D-erythritol 2,4-cyclodiphosphate synthase.